The sequence spans 180 residues: O-acetyl-ADP-ribose deacetylase (180 aa).

The Macro domain occupies Met1 to Asp175. Substrate-binding positions include Asp11–Ile12, Asn25, Gly33–Asp35, and Ser122–Tyr126. Catalysis depends on Asp35, which acts as the Proton acceptor.

Belongs to the MacroD-type family. YmdB subfamily. As to quaternary structure, homodimer. Interacts with RNase III.

It carries out the reaction 3''-O-acetyl-ADP-D-ribose + H2O = ADP-D-ribose + acetate + H(+). It catalyses the reaction 2''-O-acetyl-ADP-D-ribose + H2O = ADP-D-ribose + acetate + H(+). Functionally, deacetylates O-acetyl-ADP ribose to yield ADP-ribose and free acetate. Down-regulates ribonuclease 3 (RNase III) activity. Acts by interacting directly with the region of the ribonuclease that is required for dimerization/activation. The chain is O-acetyl-ADP-ribose deacetylase from Cronobacter sakazakii (strain ATCC BAA-894) (Enterobacter sakazakii).